A 155-amino-acid chain; its full sequence is Small ribosomal subunit protein uS7 (155 aa).

Belongs to the universal ribosomal protein uS7 family. Part of the 30S ribosomal subunit. Contacts proteins S9 and S11.

Its function is as follows. One of the primary rRNA binding proteins, it binds directly to 16S rRNA where it nucleates assembly of the head domain of the 30S subunit. Is located at the subunit interface close to the decoding center, probably blocks exit of the E-site tRNA. In Prosthecochloris aestuarii (strain DSM 271 / SK 413), this protein is Small ribosomal subunit protein uS7.